The primary structure comprises 428 residues: Aminotransferase verI (428 aa).

Residue Lys254 is modified to N6-(pyridoxal phosphate)lysine.

This sequence belongs to the class-I pyridoxal-phosphate-dependent aminotransferase family. Pyridoxal 5'-phosphate is required as a cofactor.

The protein operates within mycotoxin biosynthesis. In terms of biological role, aminotransferase; part of the gene cluster that mediates the biosynthesis of 11'-deoxyverticillin A, one of the dimeric epipolythiodioxopiperazines (ETPs) from the verticillin family that act as mycotoxins. 11'-deoxyverticillin A is required for normal conidiation. The nonribosomal peptide synthetase verP is speculated to be responsible for condensation of amino acids to form the carbon skeleton of verticillin, whereas the cluster-specific tailoring enzymes are involved in further modifications leading to the production of 11'-deoxyverticillin A. The polypeptide is Aminotransferase verI (Clonostachys rogersoniana).